The sequence spans 301 residues: Envoplakin-like protein (301 aa).

Positions 1–88 (MQASADQVER…ERVTQECAEY (88 aa)) form a coiled coil. Disordered stretches follow at residues 18 to 41 (RLQQ…TGSS) and 118 to 166 (GLRR…PEPI). Residues 26-41 (SEQSQALQHQQETGSS) show a composition bias toward polar residues. Residues 136–151 (GAQHRAEGDQRPRRAA) are compositionally biased toward basic and acidic residues.

Belongs to the plakin or cytolinker family.

This Homo sapiens (Human) protein is Envoplakin-like protein (EVPLL).